The following is a 238-amino-acid chain: Serine protease SplA (238 aa).

Positions 1–38 are cleaved as a signal peptide; the sequence is MNKNVMVKGLTALTILTILTSLGFAENISNQPHSIAKA. Catalysis depends on charge relay system residues histidine 77, aspartate 116, and serine 192.

This sequence belongs to the peptidase S1B family.

The protein resides in the secreted. The polypeptide is Serine protease SplA (splA) (Staphylococcus aureus (strain COL)).